Consider the following 455-residue polypeptide: MLLAQRRLISLGCRSKPIKTIYSSSKVLGLCTSAKMALKFKNAKRIEGLDSNVWVEFTKLAADPSVVNLGQGFPDISPPSYVKEELSKAAFIDNMNQYTRGFGHPALVKALSCLYGKIYQRQIDPNEEILVAVGAYGSLFNSIQGLVDPGDEVIIMVPFYDCYEPMVRMAGAVPVFIPLRSKPTDGMKWTSSDWTFDPRELESKFSSKTKAIILNTPHNPLGKVYTRQELQVIADLCVKHDTLCISDEVYEWLVYTGHTHVKIATLPGMWERTITIGSAGKTFSVTGWKLGWSIGPAHLIKHLQTVQQNSFYTCATPLQAALAEAFWIDIKRMDDPECYFNSLPKELEVKRDRMVRLLNSVGLKPIVPDGGYFIIADVSSLGADLSDMNSDEPYDYKFVKWMTKHKKLTAIPVSAFCDSKSKPHFEKLVRFCFIKKDSTLDAAEEIFRAWNSQKS.

G72 serves as a coordination point for substrate. K117 is subject to N6-acetyllysine; alternate. The residue at position 117 (K117) is an N6-succinyllysine; alternate. N219 provides a ligand contact to substrate. The residue at position 281 (K281) is an N6-(pyridoxal phosphate)lysine. R430 is a substrate binding site.

Belongs to the class-I pyridoxal-phosphate-dependent aminotransferase family. As to quaternary structure, homodimer. The cofactor is pyridoxal 5'-phosphate. In terms of tissue distribution, widely expressed, with higher expression levels in liver, kidney, heart and neuroendocrine tissues.

The catalysed reaction is L-kynurenine + 2-oxoglutarate = kynurenate + L-glutamate + H2O. It carries out the reaction L-kynurenine + glyoxylate = kynurenate + glycine + H2O. The enzyme catalyses 3-hydroxy-L-kynurenine + glyoxylate = xanthurenate + glycine + H2O. It catalyses the reaction an S-substituted L-cysteine + H2O = a thiol + pyruvate + NH4(+). The protein operates within amino-acid degradation; L-kynurenine degradation; kynurenate from L-kynurenine: step 1/2. Its activity is regulated as follows. Kynurenine transamination is competitively inhibited by cysteine, glutamine, histidine, methionine, leucine, or phenylalanine. Functionally, catalyzes the irreversible transamination of the L-tryptophan metabolite L-kynurenine to form kynurenic acid (KA), an intermediate in the tryptophan catabolic pathway which is also a broad spectrum antagonist of the three ionotropic excitatory amino acid receptors among others. May catalyze the beta-elimination of S-conjugates and Se-conjugates of L-(seleno)cysteine, resulting in the cleavage of the C-S or C-Se bond. Has transaminase activity towards L-kynurenine, tryptophan, phenylalanine, serine, cysteine, methionine, histidine, glutamine and asparagine with glyoxylate as an amino group acceptor (in vitro). Has lower activity with 2-oxoglutarate as amino group acceptor (in vitro). In Mus musculus (Mouse), this protein is Kynurenine--oxoglutarate transaminase 3 (Kyat3).